Consider the following 260-residue polypeptide: CD320 antigen (260 aa).

The signal sequence occupies residues 1–28 (MARGGAGRAVALGLVLRLLFGLRTGLEA). Residues 29-208 (APAPAHTRVQ…DSSRNPSAYG (180 aa)) are Extracellular-facing. Residues 46-83 (SCPTDTFQCLTSGYCVPLSWRCDGDQDCSDGSDEEDCR) form the LDL-receptor class A 1 domain. Intrachain disulfides connect C47/C60, C54/C73, and C67/C82. Ca(2+) is bound by residues W65, D68, D70, D72, D78, and E79. The N-linked (GlcNAc...) asparagine glycan is linked to N118. An LDL-receptor class A 2 domain is found at 123-160 (PCQESELHCILDDVCIPHTWRCDGHPDCLDSSDELSCD). 3 disulfides stabilise this stretch: C124-C137, C131-C150, and C144-C159. Residues W142, D145, H147, D149, D155, and E156 each coordinate Ca(2+). N185 carries N-linked (GlcNAc...) asparagine glycosylation. Residues 209-229 (VIAAAGVLSAILVSATLLILL) form a helical membrane-spanning segment. The Cytoplasmic segment spans residues 230 to 260 (RLRGQGYLPPPGLLVAVKESLLLSERKTSLI).

In terms of assembly, interacts (via LDL-receptor class A domains) with TCN2.

It is found in the cell membrane. Receptor for transcobalamin saturated with cobalamin (TCbl). Plays an important role in cobalamin uptake. Plasma membrane protein that is expressed on follicular dendritic cells (FDC) and mediates interaction with germinal center B cells. Functions as a costimulator to promote B cell responses to antigenic stimuli; promotes B cell differentiation and proliferation. Germinal center-B (GC-B) cells differentiate into memory B-cells and plasma cells (PC) through interaction with T-cells and follicular dendritic cells (FDC). CD320 augments the proliferation of PC precursors generated by IL-10. The chain is CD320 antigen (Cd320) from Mus musculus (Mouse).